Reading from the N-terminus, the 509-residue chain is DEAD-box ATP-dependent RNA helicase CshA (509 aa).

The short motif at 2 to 30 (QNFKELGISDKTVQTLEAMGFKEPTPIQK) is the Q motif element. Residues 33 to 203 (IPYALEGDDI…QQFMKAPKII (171 aa)) form the Helicase ATP-binding domain. 46 to 53 (AQTGTGKT) contributes to the ATP binding site. The short motif at 150–153 (DEAD) is the DEAD box element. The 162-residue stretch at 214–375 (QIDEYYTIVK…LRPPHRKEVL (162 aa)) folds into the Helicase C-terminal domain. 2 stretches are compositionally biased toward basic residues: residues 440–459 (ARKN…KRGN) and 467–482 (RRSK…KKNQ). The interval 440–509 (ARKNRSSKGG…KGRTFADHQK (70 aa)) is disordered. Positions 483–492 (KKFDRRDKQQ) are enriched in basic and acidic residues.

Belongs to the DEAD box helicase family. CshA subfamily. Oligomerizes, may be a member of the RNA degradosome.

The protein resides in the cytoplasm. The enzyme catalyses ATP + H2O = ADP + phosphate + H(+). Functionally, DEAD-box RNA helicase possibly involved in RNA degradation. Unwinds dsRNA in both 5'- and 3'-directions, has RNA-dependent ATPase activity. This is DEAD-box ATP-dependent RNA helicase CshA from Staphylococcus epidermidis (strain ATCC 12228 / FDA PCI 1200).